A 309-amino-acid chain; its full sequence is Dicarboxylate carrier UCP2 (309 aa).

Over 1–16 (MVGFKATDVPPTATVK) the chain is Mitochondrial intermembrane. Solcar repeat units follow at residues 11–106 (PTAT…VKQF), 114–203 (AGIG…IKDA), and 212–297 (DDLP…LKRA). The segment at 16-63 (KFLGAGTAACIADLITFPLDTAKVRLQIQGERQGPVRAAASAQYRGVL) is important for interaction with long-chain fatty acids. A helical membrane pass occupies residues 17–40 (FLGAGTAACIADLITFPLDTAKVR). Residues 41-77 (LQIQGERQGPVRAAASAQYRGVLCTILTMVRTEGPRS) are Mitochondrial matrix-facing. A helical transmembrane segment spans residues 78–103 (LYSGLVAGLQRQMSFASVRIGLYDSV). At 104 to 119 (KQFYTKGSEHAGIGSR) the chain is on the mitochondrial intermembrane side. The chain crosses the membrane as a helical span at residues 120 to 145 (LLAGSTTGALAVAVAQPTDVVKVRFQ). The Mitochondrial matrix segment spans residues 146-173 (AQARAGSGRRYQSTVDAYKTIAREEGFR). Residues 174 to 199 (GLWKGTSPNVARNAIVNCAELVTYDL) traverse the membrane as a helical segment. The Mitochondrial intermembrane segment spans residues 200-217 (IKDALLKANLMTDDLPCH). The helical transmembrane segment at 218 to 242 (FTSAFGAGFCTTVIASPVDVVKTRY) threads the bilayer. Topologically, residues 243–268 (MNSALGQYSSAGHCALTMLQKEGPRA) are mitochondrial matrix. The chain crosses the membrane as a helical span at residues 269–294 (FYKGFMPSFLRLGSWNVVMFVTYEQL). The important for interaction with long-chain fatty acids stretch occupies residues 278–285 (LRLGSWNV). Residues 295–309 (KRALMAACTSREAPF) are Mitochondrial intermembrane-facing.

The protein belongs to the mitochondrial carrier (TC 2.A.29) family. In terms of assembly, homotetramer. Adopts an asymmetrical dimer of dimers functional form. Interacts with MICU1 (when methylated); leading to decrease the calcium sensitivity of MICU1.

The protein resides in the mitochondrion inner membrane. It carries out the reaction L-aspartate(out) + phosphate(in) + H(+)(in) = L-aspartate(in) + phosphate(out) + H(+)(out). The catalysed reaction is oxaloacetate(out) + phosphate(in) + H(+)(in) = oxaloacetate(in) + phosphate(out) + H(+)(out). It catalyses the reaction (S)-malate(out) + phosphate(in) + H(+)(in) = (S)-malate(in) + phosphate(out) + H(+)(out). The enzyme catalyses malonate(out) + phosphate(in) + H(+)(in) = malonate(in) + phosphate(out) + H(+)(out). It carries out the reaction sulfate(out) + phosphate(in) + H(+)(in) = sulfate(in) + phosphate(out) + H(+)(out). The catalysed reaction is (S)-malate(out) = (S)-malate(in). It catalyses the reaction L-aspartate(out) = L-aspartate(in). The enzyme catalyses phosphate(in) = phosphate(out). It carries out the reaction chloride(in) = chloride(out). The catalysed reaction is H(+)(in) = H(+)(out). It catalyses the reaction a long-chain fatty acid(out) = a long-chain fatty acid(in). Antiporter that exports dicarboxylate intermediates of the Krebs cycle in exchange for phosphate plus a proton across the inner membrane of mitochondria, a process driven by mitochondrial motive force with an overall impact on glycolysis, glutaminolysis and glutathione-dependent redox balance. Continuous export of oxaloacetate and related four-carbon dicarboxylates from mitochondrial matrix into the cytosol negatively regulates the oxidation of acetyl-CoA substrates via the Krebs cycle lowering the ATP/ADP ratio and reactive oxygen species (ROS) production. May mediate inducible proton entry into the mitochondrial matrix affecting ATP turnover as a protection mechanism against oxidative stress. The proton currents are most likely associated with fatty acid flipping across the inner membrane of mitochondria in a metabolic process regulated by free fatty acids and purine nucleotides. Regulates the use of glucose as a source of energy. Required for glucose-induced DRP1-dependent mitochondrial fission and neuron activation in the ventromedial nucleus of the hypothalamus (VMH). This mitochondrial adaptation mechanism modulates the VMH pool of glucose-excited neurons with an impact on systemic glucose homeostasis. Regulates ROS levels and metabolic reprogramming of macrophages during the resolution phase of inflammation. Attenuates ROS production in response to IL33 to preserve the integrity of the Krebs cycle required for persistent production of itaconate and subsequent GATA3-dependent differentiation of inflammation-resolving alternatively activated macrophages. Can unidirectionally transport anions including L-malate, L-aspartate, phosphate and chloride ions. Does not mediate adaptive thermogenesis. The chain is Dicarboxylate carrier UCP2 (UCP2) from Canis lupus familiaris (Dog).